The following is a 443-amino-acid chain: D-serine dehydratase (443 aa).

Position 118 is an N6-(pyridoxal phosphate)lysine (Lys-118).

Belongs to the serine/threonine dehydratase family. DsdA subfamily. As to quaternary structure, monomer. Pyridoxal 5'-phosphate is required as a cofactor.

The catalysed reaction is D-serine = pyruvate + NH4(+). The protein is D-serine dehydratase of Escherichia coli O17:K52:H18 (strain UMN026 / ExPEC).